The primary structure comprises 349 residues: Methylthioribose-1-phosphate isomerase (349 aa).

Residues 51-53 (RGA), R94, and Q199 each bind substrate. Catalysis depends on D240, which acts as the Proton donor. 250-251 (NK) is a substrate binding site.

The protein belongs to the EIF-2B alpha/beta/delta subunits family. MtnA subfamily. As to quaternary structure, homodimer.

It carries out the reaction 5-(methylsulfanyl)-alpha-D-ribose 1-phosphate = 5-(methylsulfanyl)-D-ribulose 1-phosphate. The protein operates within amino-acid biosynthesis; L-methionine biosynthesis via salvage pathway; L-methionine from S-methyl-5-thio-alpha-D-ribose 1-phosphate: step 1/6. Its function is as follows. Catalyzes the interconversion of methylthioribose-1-phosphate (MTR-1-P) into methylthioribulose-1-phosphate (MTRu-1-P). This chain is Methylthioribose-1-phosphate isomerase, found in Bacillus mycoides (strain KBAB4) (Bacillus weihenstephanensis).